Reading from the N-terminus, the 345-residue chain is D-fructose 1,6-bisphosphatase class 2/sedoheptulose 1,7-bisphosphatase (345 aa).

Mn(2+) is bound by residues Asp-33, Glu-57, Asp-97, and Glu-100. Substrate contacts are provided by residues 100–102 (EGT), Tyr-131, 176–178 (RDR), and 198–200 (DGD). A Mn(2+)-binding site is contributed by Glu-225.

It belongs to the FBPase class 2 family. Homotetramer. Mn(2+) is required as a cofactor.

It catalyses the reaction beta-D-fructose 1,6-bisphosphate + H2O = beta-D-fructose 6-phosphate + phosphate. The catalysed reaction is D-sedoheptulose 1,7-bisphosphate + H2O = D-sedoheptulose 7-phosphate + phosphate. It functions in the pathway carbohydrate biosynthesis; Calvin cycle. Catalyzes the hydrolysis of fructose 1,6-bisphosphate (Fru 1,6-P2) and sedoheptulose 1,7-bisphosphate (Sed 1,7-P2) to fructose 6-phosphate and sedoheptulose 7-phosphate, respectively. In Nostoc sp. (strain PCC 7120 / SAG 25.82 / UTEX 2576), this protein is D-fructose 1,6-bisphosphatase class 2/sedoheptulose 1,7-bisphosphatase.